Here is a 470-residue protein sequence, read N- to C-terminus: Retinoic acid receptor RXR-gamma (470 aa).

Positions 1-145 (MHLATETAPS…NSPGALTKHI (145 aa)) are modulating. 2 consecutive NR C4-type zinc fingers follow at residues 146 to 166 (CAIC…CEGC) and 182 to 206 (CRDS…YQKC). Residues 146-211 (CAICGDRSSG…RYQKCLAMGM (66 aa)) constitute a DNA-binding region (nuclear receptor). The interval 212-235 (KREAVQEERQRSREKSDTEAESTS) is hinge. Basic and acidic residues predominate over residues 217–229 (QEERQRSREKSDT). The disordered stretch occupies residues 217–242 (QEERQRSREKSDTEAESTSSTSEEMP). An NR LBD domain is found at 238–466 (SEEMPVERIL…TFLMEMLETP (229 aa)).

It belongs to the nuclear hormone receptor family. NR2 subfamily. As to quaternary structure, homodimer. Heterodimer; with a rar molecule. Binds DNA preferentially as a rar/rxr heterodimer.

Its subcellular location is the nucleus. Its function is as follows. Receptor for retinoic acid. Retinoic acid receptors bind as heterodimers to their target response elements in response to their ligands, all-trans or 9-cis retinoic acid, and regulate gene expression in various biological processes. The rar/rxr heterodimers bind to the retinoic acid response elements (RARE) composed of tandem 5'-AGGTCA-3' sites known as DR1-DR5. The high affinity ligand for rxrs is 9-cis retinoic acid. The polypeptide is Retinoic acid receptor RXR-gamma (rxrg) (Xenopus laevis (African clawed frog)).